A 645-amino-acid polypeptide reads, in one-letter code: Aspartate--tRNA ligase, mitochondrial (645 aa).

Residues 1-47 (MYFPSWLSQLYRGLSRPIRRTTQPIWGSLYRSLLQSSQRRIPEFSSF) constitute a mitochondrion transit peptide. Thr-219 carries the phosphothreonine modification. A Phosphoserine modification is found at Ser-242. An aspartate region spans residues 244-247 (QQFK). L-aspartate is bound at residue Arg-266. 266–268 (RDE) is a binding site for ATP. Lys-382 is subject to N6-acetyllysine. Glu-535 is an ATP binding site. Arg-542 serves as a coordination point for L-aspartate. Residue 584-587 (GLDR) participates in ATP binding.

It belongs to the class-II aminoacyl-tRNA synthetase family. Type 1 subfamily. Homodimer.

The protein resides in the mitochondrion matrix. Its subcellular location is the mitochondrion membrane. The catalysed reaction is tRNA(Asp) + L-aspartate + ATP = L-aspartyl-tRNA(Asp) + AMP + diphosphate. Catalyzes the attachment of aspartate to tRNA(Asp) in a two-step reaction: aspartate is first activated by ATP to form Asp-AMP and then transferred to the acceptor end of tRNA(Asp). The polypeptide is Aspartate--tRNA ligase, mitochondrial (DARS2) (Homo sapiens (Human)).